The chain runs to 3142 residues: Huntingtin (3142 aa).

Residues 3–13 form a sufficient for interaction with TPR region; the sequence is TLEKLMKAFES. Lysine 9 bears the N6-acetyllysine mark. The interval 14 to 85 is disordered; the sequence is LKSFQQQQQQ…PGPAVAEEPL (72 aa). Low complexity predominate over residues 18–37; the sequence is QQQQQQQQQQQQQQQQQQQQ. The span at 38–78 shows a compositional bias: pro residues; sequence QPPPPPPPPPPPQLPQPPPQAQPLLPQPQPPPPPPPPPPGP. An N6-acetyllysine mark is found at lysine 176 and lysine 234. HEAT repeat units follow at residues 204-241, 246-283, and 316-360; these read PYLVNLLPCLTRTSKRPEESVQETLAAAVPKIMASFGN, NEIKVLLKAFIANLKSSSPTIRRTAAGSAVSICQHSRR, and LTLR…VYEL. Position 343 is an N6-acetyllysine (lysine 343). Residues serine 411, serine 417, serine 419, and serine 432 each carry the phosphoserine modification. Lysine 442 bears the N6-acetyllysine mark. Residues 447–469 are disordered; that stretch reads EEEALEDDSESRSDVSSSALTAS. The tract at residues 491 to 502 is interaction with ZDHHC17; it reads GHDIITEQPRSQ. Positions 517–583 are disordered; that stretch reads LTSSATDGDE…TPSDSSEIVL (67 aa). Low complexity predominate over residues 531–545; that stretch reads SHSSSQVSAVPSDPA. The span at 550–579 shows a compositional bias: polar residues; sequence DGTQASSPISDSSQTTTEGPDSAVTPSDSS. Residue glycine 551 is the site of N-myristoyl glycine attachment. Serine 640 and serine 643 each carry phosphoserine. 2 HEAT repeats span residues 802–839 and 902–940; these read FSLADCIPLLRKTLKDESSVTCKLACTAVRNCVMSLCS and KLQERVLNNVVIHLLGDEDPRVRHVAAASLIRLVPKLFY. The disordered stretch occupies residues 1176–1225; it reads PSLSPIRRKGKEKEPGEQASVPLSPKKGSEASAASRQSDTSGPVTTSKSS. A phosphoserine; by CDK5 mark is found at serine 1179 and serine 1199. The span at 1207-1225 shows a compositional bias: polar residues; sequence SAASRQSDTSGPVTTSKSS. Phosphoserine occurs at positions 1870 and 1874. A disordered region spans residues 2330 to 2351; it reads ERRTNTPKAISEEEEEVDPNTQ. A Nuclear export signal motif is present at residues 2395-2404; that stretch reads IIISLARLPL. Positions 2633–2662 are disordered; the sequence is EEEWDEEEEEEADAPAPSSPPTSPVNSRKH. Residues 2634–2645 show a composition bias toward acidic residues; sequence EEWDEEEEEEAD.

The protein belongs to the huntingtin family. In terms of assembly, interacts with PFN1. Interacts through its N-terminus with PRPF40A. Interacts with PQBP1. Interacts with SETD2. Interacts with SH3GLB1. Interacts with SYVN. Interacts with TPR; the interaction is inhibited by forms of Huntingtin with expanded polyglutamine stretch. Interacts with ZDHHC13 (via ANK repeats). Interacts with ZDHHC17 (via ANK repeats). Interacts with F8A1/F8A2/F8A3. Found in a complex with F8A1/F8A2/F8A3, HTT and RAB5A; mediates the recruitment of HTT by RAB5A. Cleaved by caspases downstream of the polyglutamine stretch. The resulting N-terminal fragments are cytotoxic and provokes apoptosis. In terms of processing, forms with expanded polyglutamine expansion are specifically ubiquitinated by SYVN1, which promotes their proteasomal degradation. Post-translationally, phosphorylation at Ser-1179 and Ser-1199 by CDK5 in response to DNA damage in nuclei of neurons protects neurons against polyglutamine expansion as well as DNA damage mediated toxicity. Myristoylated at Gly-551, following proteolytic cleavage at Asp-550. As to expression, expressed in the brain cortex (at protein level). Widely expressed with the highest level of expression in the brain (nerve fibers, varicosities, and nerve endings). In the brain, the regions where it can be mainly found are the cerebellar cortex, the neocortex, the striatum, and the hippocampal formation.

It localises to the cytoplasm. The protein localises to the nucleus. The protein resides in the early endosome. It is found in the cytoplasmic vesicle. Its subcellular location is the autophagosome. Its function is as follows. May play a role in microtubule-mediated transport or vesicle function. In terms of biological role, promotes the formation of autophagic vesicles. This is Huntingtin (HTT) from Homo sapiens (Human).